We begin with the raw amino-acid sequence, 283 residues long: Serine protease 57 (283 aa).

The first 31 residues, 1–31, serve as a signal peptide directing secretion; it reads MGLGLRGWGRPLLTVATALMLPVKPPAGSWG. The 230-residue stretch at 34–263 folds into the Peptidase S1 domain; sequence IIGGHEVTPH…FVAWIWDVVR (230 aa). A disulfide bond links C59 and C75. Catalysis depends on charge relay system residues H74 and D122. Residues N129 and N189 are each glycosylated (N-linked (GlcNAc...) asparagine). Disulfide bonds link C157/C224, C188/C202, and C214/C239. Residue S218 is the Charge relay system of the active site.

This sequence belongs to the peptidase S1 family. Post-translationally, after cleavage of the signal peptide, the N-terminus is probably further processed by CTSC. Processing by CTSC is probably required for accumulation in cytoplasmic granules; in the absence of CTSC the protein does not accumulate. N-glycosylated. As to expression, detected in peripheral blood neutrophil granulocytes, but not in other types of leukocytes. Detected in neutrophils and neutrophil precursors in bone marrow (at protein level). Detected in myeloblasts and promyelocytes in bone marrow.

It localises to the cytoplasmic granule lumen. The protein localises to the secreted. With respect to regulation, inhibited by SERPINA1, SERPINC1 and SERPING1. In terms of biological role, serine protease that cleaves preferentially after Arg residues. Can also cleave after citrulline (deimidated arginine) and methylarginine residues. This Homo sapiens (Human) protein is Serine protease 57 (PRSS57).